Here is a 293-residue protein sequence, read N- to C-terminus: Ribosomal protein L11 methyltransferase (293 aa).

Positions 145, 166, 188, and 230 each coordinate S-adenosyl-L-methionine.

The protein belongs to the methyltransferase superfamily. PrmA family.

The protein resides in the cytoplasm. The enzyme catalyses L-lysyl-[protein] + 3 S-adenosyl-L-methionine = N(6),N(6),N(6)-trimethyl-L-lysyl-[protein] + 3 S-adenosyl-L-homocysteine + 3 H(+). Its function is as follows. Methylates ribosomal protein L11. The polypeptide is Ribosomal protein L11 methyltransferase (Actinobacillus pleuropneumoniae serotype 7 (strain AP76)).